Reading from the N-terminus, the 236-residue chain is Ribosome-inactivating protein saporin-3 (236 aa).

Residue Glu148 is part of the active site.

The protein belongs to the ribosome-inactivating protein family. Type 1 RIP subfamily.

It carries out the reaction Endohydrolysis of the N-glycosidic bond at one specific adenosine on the 28S rRNA.. Ribosome-inactivating protein of type 1, inhibits protein synthesis in animal cells. Useful as immunotoxin for pharmacological applications. In Saponaria officinalis (Common soapwort), this protein is Ribosome-inactivating protein saporin-3 (SAP3).